The chain runs to 72 residues: uncharacterized protein (72 aa).

A helical transmembrane segment spans residues 46–66 (AIFVFNLCFIPNLCVACIFNV).

The protein localises to the membrane. This is an uncharacterized protein from Saccharomyces cerevisiae (strain ATCC 204508 / S288c) (Baker's yeast).